The chain runs to 873 residues: Tetratricopeptide repeat protein 16 (873 aa).

Residues M1–P20 form a disordered region. 8 TPR repeats span residues V61 to L94, D96 to N128, T136 to K169, A251 to D284, P285 to D318, L331 to E364, K365 to D398, and G406 to K439. Disordered stretches follow at residues E553–T626 and S639–V873. Over residues G571–K582 the composition is skewed to acidic residues. Residues E583–E593 show a composition bias toward basic and acidic residues. Composition is skewed to polar residues over residues A600 to T626, S639 to E663, and T675 to R693. Residues N694–S708 are compositionally biased toward basic residues. Polar residues predominate over residues K709 to E750. Over residues K763 to R784 the composition is skewed to basic residues. 2 stretches are compositionally biased toward polar residues: residues R800–S828 and G836–K860.

The chain is Tetratricopeptide repeat protein 16 (TTC16) from Homo sapiens (Human).